The primary structure comprises 1558 residues: Eukaryotic translation initiation factor 2-alpha kinase 1 (1558 aa).

Residues 429-789 (FFEEKILGCG…AYNLLHESVL (361 aa)) form the Protein kinase domain. Residues 435 to 443 (LGCGGFGYV) and Lys-458 contribute to the ATP site. Catalysis depends on Asp-660, which acts as the Proton acceptor. Residues 1014–1033 (GTSTNNNNNNNNNNMGNNNI) form a disordered region.

Belongs to the protein kinase superfamily. Ser/Thr protein kinase family. GCN2 subfamily. Auto-phosphorylated.

The catalysed reaction is L-seryl-[protein] + ATP = O-phospho-L-seryl-[protein] + ADP + H(+). It catalyses the reaction L-threonyl-[protein] + ATP = O-phospho-L-threonyl-[protein] + ADP + H(+). In blood stage parasites, phosphorylates translation factor eIF2alpha in response to amino acid starvation. During the asexual blood stage, involved in the response to the host hormone melatonin which is used by the parasite to modulate its cell cycle. The polypeptide is Eukaryotic translation initiation factor 2-alpha kinase 1 (Plasmodium falciparum (isolate 3D7)).